The following is a 180-amino-acid chain: ATP synthase subunit b (180 aa).

Residues 26-48 (SMILFWKAVNTVILLGLVYYFGG) traverse the membrane as a helical segment.

This sequence belongs to the ATPase B chain family. F-type ATPases have 2 components, F(1) - the catalytic core - and F(0) - the membrane proton channel. F(1) has five subunits: alpha(3), beta(3), gamma(1), delta(1), epsilon(1). F(0) has three main subunits: a(1), b(2) and c(10-14). The alpha and beta chains form an alternating ring which encloses part of the gamma chain. F(1) is attached to F(0) by a central stalk formed by the gamma and epsilon chains, while a peripheral stalk is formed by the delta and b chains.

It localises to the cell inner membrane. F(1)F(0) ATP synthase produces ATP from ADP in the presence of a proton or sodium gradient. F-type ATPases consist of two structural domains, F(1) containing the extramembraneous catalytic core and F(0) containing the membrane proton channel, linked together by a central stalk and a peripheral stalk. During catalysis, ATP synthesis in the catalytic domain of F(1) is coupled via a rotary mechanism of the central stalk subunits to proton translocation. In terms of biological role, component of the F(0) channel, it forms part of the peripheral stalk, linking F(1) to F(0). This Sulfurihydrogenibium sp. (strain YO3AOP1) protein is ATP synthase subunit b.